The chain runs to 90 residues: Protein LURE 1.5 (90 aa).

A signal peptide spans 1–19 (MKLPIIFLTLLIFVSSCTS). Disulfide bonds link Cys58-Cys75 and Cys61-Cys82.

Belongs to the DEFL family. In terms of tissue distribution, expressed in the pistil. Detected exclusively in the synergid cells.

The protein resides in the secreted. Functionally, inactive pollen tube attractants guiding pollen tubes to the ovular micropyle. The sequence is that of Protein LURE 1.5 from Arabidopsis thaliana (Mouse-ear cress).